We begin with the raw amino-acid sequence, 156 residues long: Single-stranded DNA-binding protein 1 (156 aa).

The SSB domain occupies 1–107; sequence MNETMICAVG…IDAVAIGHDL (107 aa). Low complexity predominate over residues 114-124; sequence FRRTARTEAST. Residues 114–156 are disordered; the sequence is FRRTARTEASTSPPRPEPNWEVPAGGTPGEPVPEQRPDPVPVG.

As to quaternary structure, homotetramer.

The sequence is that of Single-stranded DNA-binding protein 1 (ssb1) from Streptomyces coelicolor (strain ATCC BAA-471 / A3(2) / M145).